Here is a 562-residue protein sequence, read N- to C-terminus: Glucocorticoid modulatory element-binding protein 1 (562 aa).

Ala2 carries the N-acetylalanine modification. Positions 72–156 (ASSIEANEDM…RKMMDSGQID (85 aa)) constitute an SAND domain. Cys103 is a binding site for Zn(2+). DNA is bound by residues Lys129, Lys133, Lys136, and Arg147. Residues His160, Cys164, and Cys168 each contribute to the Zn(2+) site. Residues 311-357 (LDNRRKQVEHGEEQFLYTLADLERQLEEQKKQAQDPRLKSQTVQNVV) are a coiled coil. The tract at residues 360-384 (PVSTPKPPKRPRLQRPASTTVLSPS) is disordered. Residues 375–384 (PASTTVLSPS) show a composition bias toward polar residues.

In terms of assembly, homodimer, and heterodimer of GMEB1 and GMEB2. Interacts with the glucocorticoid receptor (NR3C1) and NCOA2/TIF2. May interact with HSP27 and CREB-binding protein (CBP). Interacts with TRIM63.

Its subcellular location is the nucleus. The protein localises to the cytoplasm. Functionally, trans-acting factor that binds to glucocorticoid modulatory elements (GME) present in the TAT (tyrosine aminotransferase) promoter and increases sensitivity to low concentrations of glucocorticoids. Also binds to the transferrin receptor promoter. In Rattus norvegicus (Rat), this protein is Glucocorticoid modulatory element-binding protein 1 (Gmeb1).